A 230-amino-acid polypeptide reads, in one-letter code: Urease accessory protein UreF (230 aa).

The protein belongs to the UreF family. In terms of assembly, ureD, UreF and UreG form a complex that acts as a GTP-hydrolysis-dependent molecular chaperone, activating the urease apoprotein by helping to assemble the nickel containing metallocenter of UreC. The UreE protein probably delivers the nickel.

It localises to the cytoplasm. Required for maturation of urease via the functional incorporation of the urease nickel metallocenter. This is Urease accessory protein UreF from Allorhizobium ampelinum (strain ATCC BAA-846 / DSM 112012 / S4) (Agrobacterium vitis (strain S4)).